A 193-amino-acid polypeptide reads, in one-letter code: Acyl carrier protein phosphodiesterase (193 aa).

This sequence belongs to the AcpH family.

It catalyses the reaction holo-[ACP] + H2O = apo-[ACP] + (R)-4'-phosphopantetheine + H(+). Its function is as follows. Converts holo-ACP to apo-ACP by hydrolytic cleavage of the phosphopantetheine prosthetic group from ACP. The polypeptide is Acyl carrier protein phosphodiesterase (Salmonella newport (strain SL254)).